The following is a 445-amino-acid chain: von Willebrand factor A domain-containing protein 1 (445 aa).

The first 22 residues, 1–22 (MLPWTALGLALSLRLALARSGA), serve as a signal peptide directing secretion. The VWFA domain occupies 34 to 213 (DLMFLLDSSA…ELRGSILDAM (180 aa)). Phosphoserine; by FAM20C occurs at positions 74 and 80. Tyr83 bears the Phosphotyrosine mark. At Ser93 the chain carries Phosphoserine; by FAM20C. Positions 214-304 (RPQQLHATEI…QILRVRTRPG (91 aa)) constitute a Fibronectin type-III 1 domain. A glycan (N-linked (GlcNAc...) asparagine) is linked at Asn264. Disordered regions lie at residues 302–325 (RPGE…TQLA) and 411–445 (RESA…SREP). A compositionally biased stretch (low complexity) spans 311-325 (SGPESGAGPAPTQLA). The Fibronectin type-III 2 domain maps to 334–427 (GPERIVISHA…KACTPDGPRP (94 aa)).

As to quaternary structure, homodimer or homomultimer; disulfide-linked. Interacts with HSPG2. In terms of processing, N-glycosylated.

The protein localises to the secreted. It localises to the extracellular space. Its subcellular location is the extracellular matrix. It is found in the basement membrane. Promotes matrix assembly. Involved in the organization of skeletal muscles and in the formation of neuromuscular junctions. In Homo sapiens (Human), this protein is von Willebrand factor A domain-containing protein 1.